Here is a 97-residue protein sequence, read N- to C-terminus: Eotaxin (97 aa).

Residues 1–23 (MQSSTALLFLLLTVTSFTSQVLA) form the signal peptide. Intrachain disulfides connect cysteine 32/cysteine 57 and cysteine 33/cysteine 73. O-linked (GalNAc...) threonine glycosylation is present at threonine 94.

Belongs to the intercrine beta (chemokine CC) family. Expressed constitutively in the thymus. Expression inducible in the lung (type I alveolar epithelial cells), intestine, heart, spleen, kidney.

Its subcellular location is the secreted. Functionally, in response to the presence of allergens, this protein directly promotes the accumulation of eosinophils (a prominent feature of allergic inflammatory reactions), but not lymphocytes, macrophages or neutrophils. Binds to CCR3. This is Eotaxin (Ccl11) from Mus musculus (Mouse).